A 338-amino-acid chain; its full sequence is Ribosomal RNA small subunit methyltransferase C (338 aa).

Belongs to the methyltransferase superfamily. RsmC family. Monomer.

Its subcellular location is the cytoplasm. It catalyses the reaction guanosine(1207) in 16S rRNA + S-adenosyl-L-methionine = N(2)-methylguanosine(1207) in 16S rRNA + S-adenosyl-L-homocysteine + H(+). In terms of biological role, specifically methylates the guanine in position 1207 of 16S rRNA in the 30S particle. The chain is Ribosomal RNA small subunit methyltransferase C from Buchnera aphidicola subsp. Acyrthosiphon pisum (strain APS) (Acyrthosiphon pisum symbiotic bacterium).